The sequence spans 47 residues: Ruminococcin-A (47 aa).

A signal peptide spans 1 to 23 (MRNDVLTLTNPMEENELEQILGG). 2,3-didehydrobutyrine is present on residues Thr30 and Thr39. A cross-link (beta-methyllanthionine (Thr-Cys)) is located at residues 30-35 (TISHEC). Residues 32–46 (SHECNMNTWQFLFTC) constitute a cross-link (lanthionine (Ser-Cys)). Positions 45 to 47 (TCC) form a cross-link, beta-methyllanthionine (Thr-Cys).

The protein belongs to the type A lantibiotic family. In terms of processing, maturation of lantibiotics involves the enzymatic conversion of Thr, and Ser into dehydrated AA and the formation of thioether bonds with cysteine. This is followed by membrane translocation and cleavage of the modified precursor.

The protein localises to the secreted. Lanthionine-containing peptide antibiotic (lantibiotic) active on Gram-positive bacteria. The bactericidal activity of lantibiotics is based on depolarization of energized bacterial cytoplasmic membranes, initiated by the formation of aqueous transmembrane pores. Ruminococcin A is a broad spectrum bacteriocin exhibiting activity against a wide range of pathogenic clostridia and B.longum. The polypeptide is Ruminococcin-A (rumA1) (Blautia hansenii (Ruminococcus hansenii)).